The sequence spans 149 residues: Alpha-crystallin A chain (149 aa).

A sHSP domain is found at 41–149 (LFRTVLESGI…DTSYSERPIP (109 aa)). Zn(2+) is bound by residues H89, E91, and H96.

The protein belongs to the small heat shock protein (HSP20) family. In terms of assembly, heteropolymer composed of three CRYAA and one CRYAB subunits. Inter-subunit bridging via zinc ions enhances stability, which is crucial as there is no protein turn over in the lens. Zinc coordination is achieved at least by His-89, Glu-91 and His-96. His-83 and Glu-85 come from the same molecule within the oligomer, while His-90 residue is provided by another molecule. Can also form homodimers and homotetramers (dimers of dimers) which serve as the building blocks of homooligomers.

The protein localises to the cytoplasm. It is found in the nucleus. Functionally, contributes to the transparency and refractive index of the lens. May act as a chaperone, preventing aggregation of various proteins under a wide range of stress conditions. This Trachemys scripta elegans (Red-eared slider turtle) protein is Alpha-crystallin A chain (CRYAA).